A 122-amino-acid chain; its full sequence is Putative TLX1 neighbor protein (122 aa).

Residues 21–122 (SLLSQEAMGP…LGGGRGQRGQ (102 aa)) form a disordered region. Residues 113–122 (LGGGRGQRGQ) are compositionally biased toward gly residues.

This is Putative TLX1 neighbor protein (TLX1NB) from Homo sapiens (Human).